Here is a 723-residue protein sequence, read N- to C-terminus: Threonine--tRNA ligase, mitochondrial (723 aa).

At Ser-57 the chain carries Phosphoserine. A TGS domain is found at 64 to 126; that stretch reads RAIKISLPEG…ETDCHLRFLT (63 aa).

Belongs to the class-II aminoacyl-tRNA synthetase family. As to quaternary structure, homodimer.

The protein localises to the mitochondrion matrix. The enzyme catalyses tRNA(Thr) + L-threonine + ATP = L-threonyl-tRNA(Thr) + AMP + diphosphate + H(+). Its function is as follows. Catalyzes the attachment of threonine to tRNA(Thr) in a two-step reaction: threonine is first activated by ATP to form Thr-AMP and then transferred to the acceptor end of tRNA(Thr). Also edits incorrectly charged tRNA(Thr) via its editing domain. In Mus musculus (Mouse), this protein is Threonine--tRNA ligase, mitochondrial (Tars2).